The following is a 311-amino-acid chain: Porphobilinogen deaminase (311 aa).

Cys-242 is modified (S-(dipyrrolylmethanemethyl)cysteine).

Belongs to the HMBS family. As to quaternary structure, monomer. It depends on dipyrromethane as a cofactor.

It catalyses the reaction 4 porphobilinogen + H2O = hydroxymethylbilane + 4 NH4(+). It participates in porphyrin-containing compound metabolism; protoporphyrin-IX biosynthesis; coproporphyrinogen-III from 5-aminolevulinate: step 2/4. Tetrapolymerization of the monopyrrole PBG into the hydroxymethylbilane pre-uroporphyrinogen in several discrete steps. The polypeptide is Porphobilinogen deaminase (hemC) (Neisseria meningitidis serogroup B (strain ATCC BAA-335 / MC58)).